The sequence spans 189 residues: Ras-like protein 1 (189 aa).

A GTP-binding site is contributed by 10 to 17 (GAGGVGKS). The Effector region motif lies at 32–40 (YDPTIEDSY). Residues 57–61 (DTAGQ) and 116–119 (NKCD) contribute to the GTP site. C186 carries the cysteine methyl ester modification. C186 carries the S-geranylgeranyl cysteine lipid modification. Residues 187-189 (KIL) constitute a propeptide, removed in mature form.

The protein belongs to the small GTPase superfamily. Ras family.

The protein localises to the cell membrane. It catalyses the reaction GTP + H2O = GDP + phosphate + H(+). With respect to regulation, alternates between an inactive form bound to GDP and an active form bound to GTP. Activated by a guanine nucleotide-exchange factor (GEF) and inactivated by a GTPase-activating protein (GAP). Ras proteins bind GDP/GTP and possess intrinsic GTPase activity. Plays a role in eye development by regulating cell growth, survival of postmitotic ommatidial cells and differentiation of photoreceptor cells. During larval development, mediates Ptth/tor signaling leading to the production of ecdysone, a hormone required for the initiation of metamorphosis. This Drosophila persimilis (Fruit fly) protein is Ras-like protein 1.